A 204-amino-acid polypeptide reads, in one-letter code: Recombination protein RecR (204 aa).

Residues 57-72 (CPTCFNYTDTDICRYC) form a C4-type zinc finger. The 102-residue stretch at 80 to 181 (ESICVVEEPS…KLSRIAHGVP (102 aa)) folds into the Toprim domain.

It belongs to the RecR family.

May play a role in DNA repair. It seems to be involved in an RecBC-independent recombinational process of DNA repair. It may act with RecF and RecO. This is Recombination protein RecR from Bdellovibrio bacteriovorus (strain ATCC 15356 / DSM 50701 / NCIMB 9529 / HD100).